The sequence spans 235 residues: MNNVRTVSDTKRTFYNLHTRPINTIYRRVVEELMVEMHLLSVNIDFSYNPIYALGVVTTFDRFMQGYEPERDQESIFNALCRAIEQDPQHYRQDAERLQAIAKGLPVKDLIGWLGQTTYLDRDADLQAQLQAIANNPNFKYNRLFAIGVFSLLEQSDPELVKDEKQLTEALKAIAAGLHVSDDKLNKDLELYRSNLDKMAQALVVMADMLSADRKKREQRKQQSTAPVAPPSSNE.

Residues 183 to 204 are a coiled coil; it reads DKLNKDLELYRSNLDKMAQALV. The tract at residues 213-235 is disordered; it reads DRKKREQRKQQSTAPVAPPSSNE. Polar residues predominate over residues 222–235; the sequence is QQSTAPVAPPSSNE.

This sequence belongs to the THF1 family.

In terms of biological role, may be involved in photosynthetic membrane biogenesis. This chain is Protein Thf1, found in Nostoc punctiforme (strain ATCC 29133 / PCC 73102).